We begin with the raw amino-acid sequence, 392 residues long: Phosphoglycerate kinase (392 aa).

Residues 21 to 23 (DFN), Arg-36, 59 to 62 (HLGR), Arg-118, and Arg-151 contribute to the substrate site. ATP-binding positions include Lys-201, Gly-292, Glu-323, and 349 to 352 (GGDS).

This sequence belongs to the phosphoglycerate kinase family. As to quaternary structure, monomer.

Its subcellular location is the cytoplasm. It catalyses the reaction (2R)-3-phosphoglycerate + ATP = (2R)-3-phospho-glyceroyl phosphate + ADP. It participates in carbohydrate degradation; glycolysis; pyruvate from D-glyceraldehyde 3-phosphate: step 2/5. The protein is Phosphoglycerate kinase of Borrelia duttonii (strain Ly).